The sequence spans 313 residues: Ribosomal RNA small subunit methyltransferase H (313 aa).

S-adenosyl-L-methionine contacts are provided by residues 33 to 35 (AGH), Glu52, Phe80, Asp101, and Gln108.

This sequence belongs to the methyltransferase superfamily. RsmH family.

The protein resides in the cytoplasm. The enzyme catalyses cytidine(1402) in 16S rRNA + S-adenosyl-L-methionine = N(4)-methylcytidine(1402) in 16S rRNA + S-adenosyl-L-homocysteine + H(+). Specifically methylates the N4 position of cytidine in position 1402 (C1402) of 16S rRNA. This Spiroplasma kunkelii protein is Ribosomal RNA small subunit methyltransferase H.